Here is a 339-residue protein sequence, read N- to C-terminus: Methionyl-tRNA formyltransferase (339 aa).

110–113 contacts (6S)-5,6,7,8-tetrahydrofolate; the sequence is SLLP.

Belongs to the Fmt family.

It carries out the reaction L-methionyl-tRNA(fMet) + (6R)-10-formyltetrahydrofolate = N-formyl-L-methionyl-tRNA(fMet) + (6S)-5,6,7,8-tetrahydrofolate + H(+). Its function is as follows. Attaches a formyl group to the free amino group of methionyl-tRNA(fMet). The formyl group appears to play a dual role in the initiator identity of N-formylmethionyl-tRNA by promoting its recognition by IF2 and preventing the misappropriation of this tRNA by the elongation apparatus. The polypeptide is Methionyl-tRNA formyltransferase (Prochlorococcus marinus (strain SARG / CCMP1375 / SS120)).